The chain runs to 734 residues: Sulfate transporter (734 aa).

Residues Met1–Lys18 are compositionally biased toward basic and acidic residues. The interval Met1–Arg38 is disordered. Residues Ser12 and Ser16 each carry the phosphoserine modification. The next 2 membrane-spanning stretches (helical) occupy residues Val113 to Leu133 and Pro138 to Ser158. Asn194 carries N-linked (GlcNAc...) asparagine glycosylation. 6 helical membrane passes run Ile214–Phe234, Gly237–Phe257, Val379–Phe399, Ala415–Leu435, Val453–Leu473, and Leu519–Leu539. The 152-residue stretch at Ala563–Ala714 folds into the STAS domain.

It belongs to the SLC26A/SulP transporter (TC 2.A.53) family. Post-translationally, N-glycosylated.

Its subcellular location is the cell membrane. The protein resides in the apical cell membrane. The enzyme catalyses oxalate(in) + sulfate(out) = oxalate(out) + sulfate(in). It carries out the reaction sulfate(out) + 2 chloride(in) = sulfate(in) + 2 chloride(out). The catalysed reaction is oxalate(out) + 2 chloride(in) = oxalate(in) + 2 chloride(out). It catalyses the reaction bromide(in) + chloride(out) = bromide(out) + chloride(in). The enzyme catalyses nitrate(in) + chloride(out) = nitrate(out) + chloride(in). It carries out the reaction iodide(in) + chloride(out) = iodide(out) + chloride(in). Its function is as follows. Sulfate transporter which mediates sulfate uptake into chondrocytes in order to maintain adequate sulfation of proteoglycans which is needed for cartilage development. Mediates electroneutral anion exchange of sulfate ions for oxalate ions, sulfate and oxalate ions for chloride and/or hydroxyl ions and chloride ions for bromide, iodide and nitrate ions. The coupling of sulfate transport to both hydroxyl and chloride ions likely serves to ensure transport at both acidic pH when most sulfate uptake is mediated by sulfate-hydroxide exchange and alkaline pH when most sulfate uptake is mediated by sulfate-chloride exchange. Essential for chondrocyte proliferation, differentiation and cell size expansion. The polypeptide is Sulfate transporter (SLC26A2) (Bos taurus (Bovine)).